The sequence spans 221 residues: Putative efflux system component YhbJ (221 aa).

A helical transmembrane segment spans residues 17-37 (LILTNIIGLIVVLAIIAGGAY).

This sequence belongs to the membrane fusion protein (MFP) (TC 8.A.1) family.

The protein resides in the cell membrane. In Bacillus subtilis (strain 168), this protein is Putative efflux system component YhbJ (yhbJ).